Consider the following 492-residue polypeptide: Ketol-acid reductoisomerase (NADP(+)) (492 aa).

One can recognise a KARI N-terminal Rossmann domain in the interval 14 to 208 (LDQLGRCRFM…GGHKAGVLES (195 aa)). Residues 45-48 (CGAQ), R68, R76, S78, and 108-110 (DKQ) each bind NADP(+). H132 is a catalytic residue. G158 contacts NADP(+). 2 KARI C-terminal knotted domains span residues 209-344 (SFVA…NAPK) and 345-485 (YDGK…MTDM). 4 residues coordinate Mg(2+): D217, E221, E389, and E393. Substrate is bound at residue S414.

This sequence belongs to the ketol-acid reductoisomerase family. The cofactor is Mg(2+).

The enzyme catalyses (2R)-2,3-dihydroxy-3-methylbutanoate + NADP(+) = (2S)-2-acetolactate + NADPH + H(+). It carries out the reaction (2R,3R)-2,3-dihydroxy-3-methylpentanoate + NADP(+) = (S)-2-ethyl-2-hydroxy-3-oxobutanoate + NADPH + H(+). The protein operates within amino-acid biosynthesis; L-isoleucine biosynthesis; L-isoleucine from 2-oxobutanoate: step 2/4. It participates in amino-acid biosynthesis; L-valine biosynthesis; L-valine from pyruvate: step 2/4. In terms of biological role, involved in the biosynthesis of branched-chain amino acids (BCAA). Catalyzes an alkyl-migration followed by a ketol-acid reduction of (S)-2-acetolactate (S2AL) to yield (R)-2,3-dihydroxy-isovalerate. In the isomerase reaction, S2AL is rearranged via a Mg-dependent methyl migration to produce 3-hydroxy-3-methyl-2-ketobutyrate (HMKB). In the reductase reaction, this 2-ketoacid undergoes a metal-dependent reduction by NADPH to yield (R)-2,3-dihydroxy-isovalerate. The protein is Ketol-acid reductoisomerase (NADP(+)) of Haemophilus influenzae (strain PittGG).